The following is a 426-amino-acid chain: Serine--tRNA ligase (426 aa).

An L-serine-binding site is contributed by 231–233 (TSE). 262 to 264 (RSE) provides a ligand contact to ATP. L-serine is bound at residue Glu-285. Residue 349–352 (EISS) participates in ATP binding. Ser-385 contacts L-serine.

Belongs to the class-II aminoacyl-tRNA synthetase family. Type-1 seryl-tRNA synthetase subfamily. In terms of assembly, homodimer. The tRNA molecule binds across the dimer.

The protein localises to the cytoplasm. It catalyses the reaction tRNA(Ser) + L-serine + ATP = L-seryl-tRNA(Ser) + AMP + diphosphate + H(+). The catalysed reaction is tRNA(Sec) + L-serine + ATP = L-seryl-tRNA(Sec) + AMP + diphosphate + H(+). Its pathway is aminoacyl-tRNA biosynthesis; selenocysteinyl-tRNA(Sec) biosynthesis; L-seryl-tRNA(Sec) from L-serine and tRNA(Sec): step 1/1. Catalyzes the attachment of serine to tRNA(Ser). Is also able to aminoacylate tRNA(Sec) with serine, to form the misacylated tRNA L-seryl-tRNA(Sec), which will be further converted into selenocysteinyl-tRNA(Sec). This Legionella pneumophila (strain Lens) protein is Serine--tRNA ligase.